A 394-amino-acid polypeptide reads, in one-letter code: Dual-specificity RNA methyltransferase RlmN (394 aa).

Catalysis depends on glutamate 92, which acts as the Proton acceptor. The region spanning 98-341 (ENDRGTLCIS…TTVRRTRGDD (244 aa)) is the Radical SAM core domain. A disulfide bridge connects residues cysteine 105 and cysteine 346. Residues cysteine 112, cysteine 116, and cysteine 119 each coordinate [4Fe-4S] cluster. Residues 166 to 167 (GE), serine 198, 220 to 222 (SLH), and asparagine 303 each bind S-adenosyl-L-methionine. Residue cysteine 346 is the S-methylcysteine intermediate of the active site. The interval 374–394 (DSAVQRRADAAPSGSATETTR) is disordered.

Belongs to the radical SAM superfamily. RlmN family. [4Fe-4S] cluster is required as a cofactor.

It is found in the cytoplasm. The enzyme catalyses adenosine(2503) in 23S rRNA + 2 reduced [2Fe-2S]-[ferredoxin] + 2 S-adenosyl-L-methionine = 2-methyladenosine(2503) in 23S rRNA + 5'-deoxyadenosine + L-methionine + 2 oxidized [2Fe-2S]-[ferredoxin] + S-adenosyl-L-homocysteine. It catalyses the reaction adenosine(37) in tRNA + 2 reduced [2Fe-2S]-[ferredoxin] + 2 S-adenosyl-L-methionine = 2-methyladenosine(37) in tRNA + 5'-deoxyadenosine + L-methionine + 2 oxidized [2Fe-2S]-[ferredoxin] + S-adenosyl-L-homocysteine. Functionally, specifically methylates position 2 of adenine 2503 in 23S rRNA and position 2 of adenine 37 in tRNAs. m2A2503 modification seems to play a crucial role in the proofreading step occurring at the peptidyl transferase center and thus would serve to optimize ribosomal fidelity. In Methylibium petroleiphilum (strain ATCC BAA-1232 / LMG 22953 / PM1), this protein is Dual-specificity RNA methyltransferase RlmN.